A 414-amino-acid polypeptide reads, in one-letter code: Bifunctional protein GlmU (414 aa).

The interval 1–208 is pyrophosphorylase; sequence MDAVILCAGS…SSKLYGIELN (208 aa). UTP-binding positions include 6–9, glutamine 74, and glycine 79; that span reads LCAG. Threonine 80, glycine 130, asparagine 142, and asparagine 162 together coordinate N-acetyl-alpha-D-glucosamine 1-phosphate. The interval 209–228 is linker; the sequence is GYWNDIGRPWDVLSANNYFL. An N-acetyltransferase region spans residues 229 to 414; the sequence is KNIMPKISGN…KDELIIKKRN (186 aa). Histidine 312 acts as the Proton acceptor in catalysis. Residues alanine 388 and lysine 405 each coordinate acetyl-CoA.

This sequence in the N-terminal section; belongs to the N-acetylglucosamine-1-phosphate uridyltransferase family. In the C-terminal section; belongs to the transferase hexapeptide repeat family.

The catalysed reaction is N-acetyl-alpha-D-glucosamine 1-phosphate + UTP + H(+) = UDP-N-acetyl-alpha-D-glucosamine + diphosphate. The enzyme catalyses alpha-D-glucosamine 1-phosphate + acetyl-CoA = N-acetyl-alpha-D-glucosamine 1-phosphate + CoA + H(+). It functions in the pathway nucleotide-sugar biosynthesis; UDP-N-acetyl-alpha-D-glucosamine biosynthesis; N-acetyl-alpha-D-glucosamine 1-phosphate from alpha-D-glucosamine 6-phosphate (route II): step 2/2. It participates in nucleotide-sugar biosynthesis; UDP-N-acetyl-alpha-D-glucosamine biosynthesis; UDP-N-acetyl-alpha-D-glucosamine from N-acetyl-alpha-D-glucosamine 1-phosphate: step 1/1. Functionally, catalyzes the last two sequential reactions in the de novo biosynthetic pathway for UDP-N-acetyl-glucosamine (UDP-GlcNAc). Responsible for the acetylation of GlcN-1-P to GlcNAc-1-P, and for the uridyl transfer from UTP to GlcNAc-1-P, to produce UDP-GlcNAc and pyrophosphate. This chain is Bifunctional protein GlmU, found in Methanococcus vannielii (strain ATCC 35089 / DSM 1224 / JCM 13029 / OCM 148 / SB).